The following is a 483-amino-acid chain: MGSDHHHRKLHVMFFPFMAYGHMIPTLDMAKLFSSRGAKSTILTTSLNSKILQKPIDTFKNLNPGLEIDIQIFNFPCVELGLPEGCENVDFFTSNNNDDKNEMIVKFFFSTRFFKDQLEKLLGTTRPDCLIADMFFPWATEAAGKFNVPRLVFHGTGYFSLCAGYCIGVHKPQKRVASSSEPFVIPELPGNIVITEEQIIDGDGESDMGKFMTEVRESEVKSSGVVLNSFYELEHDYADFYKSCVQKRAWHIGPLSVYNRGFEEKAERGKKANIDEAECLKWLDSKKPNSVIYVSFGSVAFFKNEQLFEIAAGLEASGTSFIWVVRKTKDDREEWLPEGFEERVKGKGMIIRGWAPQVLILDHQATGGFVTHCGWNSLLEGVAAGLPMVTWPVGAEQFYNEKLVTQVLRTGVSVGASKHMKVMMGDFISREKVDKAVREVLAGEAAEERRRRAKKLAAMAKAAVEEGGSSFNDLNSFMEEFSS.

The active-site Proton acceptor is His22. His22 contacts an anthocyanidin. The active-site Charge relay is Asp133. UDP-alpha-D-glucose-binding residues include Ala355, Gln357, His372, Trp375, Asn376, Ser377, and Glu380. Ala395 is a binding site for an anthocyanidin. Positions 396 and 397 each coordinate UDP-alpha-D-glucose.

It belongs to the UDP-glycosyltransferase family. As to expression, expressed in roots and flowers.

The catalysed reaction is a 7-O-hydroxy-flavonol + UDP-alpha-D-glucose = a flavonol 7-O-beta-D-glucoside + UDP + H(+). It participates in secondary metabolite biosynthesis; flavonoid biosynthesis. In terms of biological role, catalyzes the glycosylation of flavonoids from UDP-glucose. Uses a wide range of flavonoid substrates including flavonols (quercetin, kaempferol, isorhamnetin, 3-OH 7,2',4'-MeO-flavone), flavones (luteolin, apigenin), flavanones (naringenin, hesperetin), flavanonols (taxifolin), isoflavones (genistein, daidzein), flavonol glycosides (quercitrin, isoquercitrin, rutin), and chalcones (isoliquiritigenin). Specific for the C-7 position, with a 20-fold lower activity for the C-3 position. This chain is UDP-glucosyl transferase 73B2 (UGT73B2), found in Arabidopsis thaliana (Mouse-ear cress).